A 103-amino-acid polypeptide reads, in one-letter code: Probable protease inhibitor Egf0.4b (103 aa).

Residues methionine 1 to threonine 22 form the signal peptide. Residues cysteine 35–cysteine 87 form the TIL domain.

This sequence belongs to the polydnaviridae EGF-like motif protein family.

This Microplitis demolitor bracovirus (isolate Webb) (MdBV) protein is Probable protease inhibitor Egf0.4b (O11).